The following is a 256-amino-acid chain: Deoxyribose-phosphate aldolase (256 aa).

Aspartate 102 acts as the Proton donor/acceptor in catalysis. Lysine 165 (schiff-base intermediate with acetaldehyde) is an active-site residue. The Proton donor/acceptor role is filled by lysine 197.

Belongs to the DeoC/FbaB aldolase family. DeoC type 2 subfamily.

The protein localises to the cytoplasm. It catalyses the reaction 2-deoxy-D-ribose 5-phosphate = D-glyceraldehyde 3-phosphate + acetaldehyde. It functions in the pathway carbohydrate degradation; 2-deoxy-D-ribose 1-phosphate degradation; D-glyceraldehyde 3-phosphate and acetaldehyde from 2-deoxy-alpha-D-ribose 1-phosphate: step 2/2. Catalyzes a reversible aldol reaction between acetaldehyde and D-glyceraldehyde 3-phosphate to generate 2-deoxy-D-ribose 5-phosphate. The polypeptide is Deoxyribose-phosphate aldolase (Shewanella baltica (strain OS223)).